The sequence spans 292 residues: Golgi to ER traffic protein 2 (292 aa).

Basic and acidic residues predominate over residues 1–18; sequence MSELSAEEKRKLLRERRQ. The disordered stretch occupies residues 1-80; that stretch reads MSELSAEEKR…TPLHDDPEVP (80 aa). At 1–158 the chain is on the cytoplasmic side; it reads MSELSAEEKR…SQYHAYEQKQ (158 aa). Composition is skewed to polar residues over residues 29–47 and 55–71; these read RLNN…NVTS and ATTT…QSPT. A helical membrane pass occupies residues 159 to 179; sequence WKARFLVVRWIIHTLNFVYHY. Residues 180-205 lie on the Lumenal side of the membrane; that stretch reads IASGYKLSASPYAFVRAQAVDSHVRT. The chain crosses the membrane as a helical span at residues 206-225; the sequence is FFTAFLTVEVAVISAYFLVM. Residues 226 to 268 lie on the Cytoplasmic side of the membrane; it reads SQPKFKDFSRENLVSRILSMASAVVPAVGRYQPLVTRALVYWN. A helical transmembrane segment spans residues 269–289; sequence GASIFVGDLMLMVFYFGITSV. The Lumenal segment spans residues 290–292; sequence LGN.

It belongs to the GET2 family. In terms of assembly, component of the Golgi to ER traffic (GET) complex, which is composed of GET1, GET2 and GET3. Within the complex, GET1 and GET2 form a heterotetramer which is stabilized by phosphatidylinositol binding and which binds to the GET3 homodimer.

The protein localises to the endoplasmic reticulum membrane. It is found in the golgi apparatus membrane. Its function is as follows. Required for the post-translational delivery of tail-anchored (TA) proteins to the endoplasmic reticulum. Together with GET1, acts as a membrane receptor for soluble GET3, which recognizes and selectively binds the transmembrane domain of TA proteins in the cytosol. The GET complex cooperates with the HDEL receptor ERD2 to mediate the ATP-dependent retrieval of resident ER proteins that contain a C-terminal H-D-E-L retention signal from the Golgi to the ER. The protein is Golgi to ER traffic protein 2 of Clavispora lusitaniae (strain ATCC 42720) (Yeast).